A 260-amino-acid polypeptide reads, in one-letter code: Ribose-5-phosphate isomerase A (260 aa).

Residues 33–36, 89–92, and 102–105 contribute to the substrate site; these read TGST, DGAD, and KGGG. Glu-111 acts as the Proton acceptor in catalysis. Lys-129 is a binding site for substrate.

This sequence belongs to the ribose 5-phosphate isomerase family. Homodimer.

The enzyme catalyses aldehydo-D-ribose 5-phosphate = D-ribulose 5-phosphate. It participates in carbohydrate degradation; pentose phosphate pathway; D-ribose 5-phosphate from D-ribulose 5-phosphate (non-oxidative stage): step 1/1. In terms of biological role, catalyzes the reversible conversion of ribose-5-phosphate to ribulose 5-phosphate. The polypeptide is Ribose-5-phosphate isomerase A (Dinoroseobacter shibae (strain DSM 16493 / NCIMB 14021 / DFL 12)).